Here is a 505-residue protein sequence, read N- to C-terminus: ATP synthase subunit alpha, chloroplastic (505 aa).

170 to 177 (GDRQTGKT) contacts ATP.

Belongs to the ATPase alpha/beta chains family. In terms of assembly, F-type ATPases have 2 components, CF(1) - the catalytic core - and CF(0) - the membrane proton channel. CF(1) has five subunits: alpha(3), beta(3), gamma(1), delta(1), epsilon(1). CF(0) has four main subunits: a, b, b' and c.

The protein localises to the plastid. The protein resides in the chloroplast thylakoid membrane. The enzyme catalyses ATP + H2O + 4 H(+)(in) = ADP + phosphate + 5 H(+)(out). Its function is as follows. Produces ATP from ADP in the presence of a proton gradient across the membrane. The alpha chain is a regulatory subunit. The chain is ATP synthase subunit alpha, chloroplastic from Oenothera parviflora (Small-flowered evening primrose).